A 425-amino-acid chain; its full sequence is Serine--tRNA ligase (425 aa).

An L-serine-binding site is contributed by 231–233; sequence TAE. Residue 262–264 coordinates ATP; it reads RSE. An L-serine-binding site is contributed by Glu285. 349 to 352 provides a ligand contact to ATP; the sequence is EISS. Residue Ser385 participates in L-serine binding.

Belongs to the class-II aminoacyl-tRNA synthetase family. Type-1 seryl-tRNA synthetase subfamily. As to quaternary structure, homodimer. The tRNA molecule binds across the dimer.

It is found in the cytoplasm. The catalysed reaction is tRNA(Ser) + L-serine + ATP = L-seryl-tRNA(Ser) + AMP + diphosphate + H(+). It carries out the reaction tRNA(Sec) + L-serine + ATP = L-seryl-tRNA(Sec) + AMP + diphosphate + H(+). The protein operates within aminoacyl-tRNA biosynthesis; selenocysteinyl-tRNA(Sec) biosynthesis; L-seryl-tRNA(Sec) from L-serine and tRNA(Sec): step 1/1. Functionally, catalyzes the attachment of serine to tRNA(Ser). Is also able to aminoacylate tRNA(Sec) with serine, to form the misacylated tRNA L-seryl-tRNA(Sec), which will be further converted into selenocysteinyl-tRNA(Sec). The chain is Serine--tRNA ligase from Bartonella bacilliformis (strain ATCC 35685 / KC583 / Herrer 020/F12,63).